Reading from the N-terminus, the 456-residue chain is Acetylcholine receptor subunit alpha (456 aa).

An N-terminal signal peptide occupies residues 1-20; that stretch reads MNYFILILPILPYLYGPAVC. At 21–230 the chain is on the extracellular side; it reads SEDETRLVKT…ITYHFLLLRL (210 aa). 2 cysteine pairs are disulfide-bonded: Cys148/Cys162 and Cys212/Cys213. A glycan (N-linked (GlcNAc...) asparagine) is linked at Asn161. A run of 3 helical transmembrane segments spans residues 231-255, 263-281, and 297-316; these read PLYFIVNVIIPCMLFSFLTGLVFYL, MTLSISVLLSLTVFLLVIV, and YMLFTMIFVIASIIITVIVI. At 317-428 the chain is on the cytoplasmic side; that stretch reads NTHHRSPSTH…WKFVAMVLDH (112 aa). The helical transmembrane segment at 429-447 threads the bilayer; it reads ILLCVFMAVCIIGTLGVFA.

It belongs to the ligand-gated ion channel (TC 1.A.9) family. Acetylcholine receptor (TC 1.A.9.1) subfamily. Alpha-1/CHRNA1 sub-subfamily. In terms of assembly, one of the alpha chains that assemble within the acetylcholine receptor, a pentamer of two alpha chains, a beta, a delta, and a gamma or epsilon chains.

It is found in the postsynaptic cell membrane. It localises to the cell membrane. It catalyses the reaction K(+)(in) = K(+)(out). It carries out the reaction Na(+)(in) = Na(+)(out). Upon acetylcholine binding, the AChR responds by an extensive change in conformation that affects all subunits and leads to opening of an ion-conducting channel across the plasma membrane. This Danio rerio (Zebrafish) protein is Acetylcholine receptor subunit alpha (chrna1).